Here is a 110-residue protein sequence, read N- to C-terminus: Iron-sulfur cluster assembly protein CyaY (110 aa).

The protein belongs to the frataxin family.

In terms of biological role, involved in iron-sulfur (Fe-S) cluster assembly. May act as a regulator of Fe-S biogenesis. The chain is Iron-sulfur cluster assembly protein CyaY from Paracidovorax citrulli (strain AAC00-1) (Acidovorax citrulli).